The primary structure comprises 202 residues: ATP-dependent Clp protease proteolytic subunit 2 (202 aa).

Serine 99 (nucleophile) is an active-site residue. Residue histidine 124 is part of the active site.

Belongs to the peptidase S14 family. Fourteen ClpP subunits assemble into 2 heptameric rings which stack back to back to give a disk-like structure with a central cavity, resembling the structure of eukaryotic proteasomes.

It localises to the cytoplasm. It catalyses the reaction Hydrolysis of proteins to small peptides in the presence of ATP and magnesium. alpha-casein is the usual test substrate. In the absence of ATP, only oligopeptides shorter than five residues are hydrolyzed (such as succinyl-Leu-Tyr-|-NHMec, and Leu-Tyr-Leu-|-Tyr-Trp, in which cleavage of the -Tyr-|-Leu- and -Tyr-|-Trp bonds also occurs).. Its function is as follows. Cleaves peptides in various proteins in a process that requires ATP hydrolysis. Has a chymotrypsin-like activity. Plays a major role in the degradation of misfolded proteins. The protein is ATP-dependent Clp protease proteolytic subunit 2 of Desulfitobacterium hafniense (strain Y51).